The following is a 201-amino-acid chain: FMN-dependent NADH:quinone oxidoreductase (201 aa).

FMN-binding positions include Ser-10, 16 to 18 (SQS), 96 to 99 (MYNF), and 140 to 143 (SRGG).

Belongs to the azoreductase type 1 family. Homodimer. FMN is required as a cofactor.

The enzyme catalyses 2 a quinone + NADH + H(+) = 2 a 1,4-benzosemiquinone + NAD(+). The catalysed reaction is N,N-dimethyl-1,4-phenylenediamine + anthranilate + 2 NAD(+) = 2-(4-dimethylaminophenyl)diazenylbenzoate + 2 NADH + 2 H(+). Quinone reductase that provides resistance to thiol-specific stress caused by electrophilic quinones. In terms of biological role, also exhibits azoreductase activity. Catalyzes the reductive cleavage of the azo bond in aromatic azo compounds to the corresponding amines. The sequence is that of FMN-dependent NADH:quinone oxidoreductase from Salmonella choleraesuis (strain SC-B67).